Reading from the N-terminus, the 423-residue chain is Osteomodulin (423 aa).

The first 20 residues, 1–20, serve as a signal peptide directing secretion; the sequence is MGCLRPIYVLFFCFVVRVYG. Sulfotyrosine is present on residues Y22, Y25, Y31, Y39, Y51, and Y77. The 39-residue stretch at 53–91 folds into the LRRNT domain; the sequence is APFYQNILGCAKECFCPTNFPTSMYCDNRKLKTIPDIPM. LRR repeat units lie at residues 92–113, 116–129, 142–164, 165–184, 187–207, 213–233, 234–255, 258–279, 281–294, 301–322, and 331–353; these read HIQQLNLQFNDIEAVTADSFIN, HLKEINLSHNKIKS, NLQQLHLDHNNLEEFPFPLPKSL, ERLLLGYNEISTLPTHAMDG, NVTMLDLCYNHLSDSTLKGKI, KLMQLNLCNNRLESMPPGLPL, SLMYLSLENNSISSIPEDYFQK, KLHALRISHNKLEDIPYDIFNL, NLIELNVGHNKLKQ, NLEHLYLQNNEIQSINVTMMCP, and HLTYLRVDQNKLKEPISSYIFFC. 2 N-linked (GlcNAc...) asparagine glycosylation sites follow: N113 and N121. A glycan (N-linked (GlcNAc...) asparagine) is linked at N187. N242 and N278 each carry an N-linked (GlcNAc...) asparagine glycan. A glycan (N-linked (GlcNAc...) asparagine) is linked at N316. A disulfide bridge connects residues C321 and C353. A disordered region spans residues 383–408; the sequence is YQDEEEEEEDDSQDHTLEGQEETEEH. Residues 385–394 show a composition bias toward acidic residues; that stretch reads DEEEEEEDDS. 2 positions are modified to sulfotyrosine: Y413 and Y414.

It belongs to the small leucine-rich proteoglycan (SLRP) family. SLRP class II subfamily. Binds the alpha(V)beta(3)-integrin. Glycosylated; contains keratan sulfate. Osteoblast and odontoblast. Expressed in femoral bone and calvaria tissues. Detected in femoral head, rib, tendon and bone marrow.

The protein resides in the secreted. Its subcellular location is the extracellular space. It localises to the extracellular matrix. May be implicated in biomineralization processes. Has a function in binding of osteoblasts via the alpha(V)beta(3)-integrin. This chain is Osteomodulin (Omd), found in Rattus norvegicus (Rat).